The primary structure comprises 461 residues: Tumor necrosis factor receptor superfamily member 1A (461 aa).

An N-terminal signal peptide occupies residues 1–29; that stretch reads MGLPIVPGLLLSLVLLALLMGIHPSGVTG. At 30–211 the chain is on the extracellular side; that stretch reads LVPSLGDREK…VTNPQDSGTA (182 aa). TNFR-Cys repeat units follow at residues 43–82, 83–125, 126–166, and 167–196; these read LCPQ…TVCE, VCDK…DTVC, GCKK…NTVC, and NCHA…KLCL. 12 disulfides stabilise this stretch: Cys44–Cys58, Cys59–Cys72, Cys62–Cys81, Cys84–Cys99, Cys102–Cys117, Cys105–Cys125, Cys127–Cys143, Cys146–Cys158, Cys149–Cys166, Cys168–Cys179, Cys182–Cys195, and Cys185–Cys191. N-linked (GlcNAc...) asparagine glycosylation is present at Asn54. The N-linked (GlcNAc...) asparagine glycan is linked to Asn151. Asn201 carries N-linked (GlcNAc...) asparagine glycosylation. A helical membrane pass occupies residues 212–234; sequence VLLPLVIFLGLCLLFFICISLLC. At 235 to 461 the chain is on the cytoplasmic side; sequence RYPQWRPRVY…AHSSTTHLPR (227 aa). Residues 344–354 are N-SMase activation domain (NSD); the sequence is VRKWEDVVAAQ. Positions 363–448 constitute a Death domain; it reads PAMLYAVVDG…GCLENIRETL (86 aa).

Binding of TNF to the extracellular domain leads to homotrimerization. The aggregated death domains provide a novel molecular interface that interacts specifically with the death domain of TRADD. Various TRADD-interacting proteins such as TRAFS, RIPK1 and possibly FADD, are recruited to the complex by their association with TRADD. This complex activates at least two distinct signaling cascades, apoptosis and NF-kappa-B signaling. Interacts with BAG4, BABAM2, FEM1B, GRB2, SQSTM1 and TRPC4AP. Interacts with DAB2IP. Interacts directly with NOL3 (via CARD domain); inhibits TNF-signaling pathway. Interacts with SH3RF2, TRADD and RIPK1. SH3RF2 facilitates the recruitment of RIPK1 and TRADD to TNFRSF1A in a TNF-alpha-dependent process. Interacts with PGLYRP1; this interaction is important for cell death induction. Interacts (via death domain) with MADD (via death domain).

The protein localises to the cell membrane. It is found in the golgi apparatus membrane. Functionally, receptor for TNFSF2/TNF-alpha and homotrimeric TNFSF1/lymphotoxin-alpha. The adapter molecule FADD recruits caspase-8 to the activated receptor. The resulting death-inducing signaling complex (DISC) performs caspase-8 proteolytic activation which initiates the subsequent cascade of caspases (aspartate-specific cysteine proteases) mediating apoptosis. The sequence is that of Tumor necrosis factor receptor superfamily member 1A (Tnfrsf1a) from Rattus norvegicus (Rat).